A 368-amino-acid polypeptide reads, in one-letter code: Agmatine deiminase (368 aa).

The active-site Amidino-cysteine intermediate is the C357.

Belongs to the agmatine deiminase family. As to quaternary structure, homodimer.

The enzyme catalyses agmatine + H2O = N-carbamoylputrescine + NH4(+). It functions in the pathway amine and polyamine biosynthesis; putrescine biosynthesis via agmatine pathway; N-carbamoylputrescine from agmatine: step 1/1. Mediates the hydrolysis of agmatine into N-carbamoylputrescine in the arginine decarboxylase (ADC) pathway of putrescine biosynthesis, a basic polyamine. In Pseudomonas savastanoi pv. phaseolicola (strain 1448A / Race 6) (Pseudomonas syringae pv. phaseolicola (strain 1448A / Race 6)), this protein is Agmatine deiminase.